The sequence spans 125 residues: Histone H1-like protein Hc1 (125 aa).

A disordered region spans residues 98-125 (TKAKVKPTKKAAPKTKVKTAKKTRSTKK). Basic residues predominate over residues 100-125 (AKVKPTKKAAPKTKVKTAKKTRSTKK).

This sequence belongs to the histone H1/H5 family. HCT subfamily.

Might have a role analogous to that of eukaryotic histone proteins. In Chlamydia trachomatis serovar D (strain ATCC VR-885 / DSM 19411 / UW-3/Cx), this protein is Histone H1-like protein Hc1 (hctA).